Reading from the N-terminus, the 79-residue chain is Acyl carrier protein (79 aa).

Residues 2–77 (ENIEQRVKKI…QAIDYVTAHL (76 aa)) enclose the Carrier domain. At S37 the chain carries O-(pantetheine 4'-phosphoryl)serine.

Belongs to the acyl carrier protein (ACP) family. In terms of processing, 4'-phosphopantetheine is transferred from CoA to a specific serine of apo-ACP by AcpS. This modification is essential for activity because fatty acids are bound in thioester linkage to the sulfhydryl of the prosthetic group.

The protein localises to the cytoplasm. It participates in lipid metabolism; fatty acid biosynthesis. In terms of biological role, carrier of the growing fatty acid chain in fatty acid biosynthesis. In Aromatoleum aromaticum (strain DSM 19018 / LMG 30748 / EbN1) (Azoarcus sp. (strain EbN1)), this protein is Acyl carrier protein.